The following is a 116-amino-acid chain: Beta-2-microglobulin (116 aa).

The N-terminal stretch at 1–19 (MKFLLSFVVLAVFSASAFA) is a signal peptide. Residues 24 to 111 (PKIQVYSRNP…RHLKETKNIS (88 aa)) enclose the Ig-like C1-type domain. Cys44 and Cys99 are disulfide-bonded.

This sequence belongs to the beta-2-microglobulin family. As to quaternary structure, heterodimer of an alpha chain and a beta chain. Beta-2-microglobulin is the beta-chain of major histocompatibility complex class I molecules.

The protein localises to the secreted. In terms of biological role, component of the class I major histocompatibility complex (MHC). Involved in the presentation of peptide antigens to the immune system. This is Beta-2-microglobulin (b2m) from Ictalurus punctatus (Channel catfish).